The sequence spans 740 residues: NAD(P)H-quinone oxidoreductase subunit 5, chloroplastic (740 aa).

16 helical membrane-spanning segments follow: residues 9–29, 40–60, 89–109, 125–145, 147–167, 185–205, 219–239, 258–278, 286–306, 327–347, 354–374, 396–416, 425–445, 543–563, 602–622, and 717–737; these read WIIP…LFLF, WAFQ…YLSI, IDPL…MVLI, FAYM…SNLI, IYIF…FWFT, GDFG…SFEF, NEVD…GAVA, TPIS…FLVA, VIPY…LLGA, LGYM…FHLI, ALLF…VGYS, ITFL…CFWS, WLYS…TAFY, LFPI…GIPF, VLSV…YKPI, and SYLF…YLLF.

Belongs to the complex I subunit 5 family. As to quaternary structure, NDH is composed of at least 16 different subunits, 5 of which are encoded in the nucleus.

Its subcellular location is the plastid. It is found in the chloroplast thylakoid membrane. The enzyme catalyses a plastoquinone + NADH + (n+1) H(+)(in) = a plastoquinol + NAD(+) + n H(+)(out). It carries out the reaction a plastoquinone + NADPH + (n+1) H(+)(in) = a plastoquinol + NADP(+) + n H(+)(out). Functionally, NDH shuttles electrons from NAD(P)H:plastoquinone, via FMN and iron-sulfur (Fe-S) centers, to quinones in the photosynthetic chain and possibly in a chloroplast respiratory chain. The immediate electron acceptor for the enzyme in this species is believed to be plastoquinone. Couples the redox reaction to proton translocation, and thus conserves the redox energy in a proton gradient. The polypeptide is NAD(P)H-quinone oxidoreductase subunit 5, chloroplastic (ndhF) (Nicotiana tabacum (Common tobacco)).